We begin with the raw amino-acid sequence, 155 residues long: Secreted RxLR effector protein RXLR-C301 (155 aa).

The signal sequence occupies residues 1–24; it reads MRLYALSVSLLAAITLLACVIASA. Residues 34 to 64 carry the RxLR-dEER motif; that stretch reads RRLSQDVSETEITELSESKKPTAQDIDNEER.

Belongs to the RxLR effector family.

The protein localises to the secreted. It is found in the host cell membrane. Functionally, secreted effector that does not suppress pattern-triggered immunity (PTI) in plant host. The polypeptide is Secreted RxLR effector protein RXLR-C301 (Plasmopara halstedii (Downy mildew of sunflower)).